The primary structure comprises 494 residues: tRNA-2-methylthio-N(6)-dimethylallyladenosine synthase (494 aa).

An MTTase N-terminal domain is found at 4–120 (RSYQVRTFGC…LPVLLERARH (117 aa)). Positions 13, 49, 83, 157, 161, and 164 each coordinate [4Fe-4S] cluster. Positions 143 to 374 (RASHHSAWVS…SLQDEMSWAE (232 aa)) constitute a Radical SAM core domain. The 74-residue stretch at 376–449 (RAQVGRRVEI…PHHLTADGPL (74 aa)) folds into the TRAM domain. The disordered stretch occupies residues 465–494 (RAIAGDTPRPDRPAVSLGMPQLRPSAPAAR).

This sequence belongs to the methylthiotransferase family. MiaB subfamily. Monomer. Requires [4Fe-4S] cluster as cofactor.

Its subcellular location is the cytoplasm. It carries out the reaction N(6)-dimethylallyladenosine(37) in tRNA + (sulfur carrier)-SH + AH2 + 2 S-adenosyl-L-methionine = 2-methylsulfanyl-N(6)-dimethylallyladenosine(37) in tRNA + (sulfur carrier)-H + 5'-deoxyadenosine + L-methionine + A + S-adenosyl-L-homocysteine + 2 H(+). Its function is as follows. Catalyzes the methylthiolation of N6-(dimethylallyl)adenosine (i(6)A), leading to the formation of 2-methylthio-N6-(dimethylallyl)adenosine (ms(2)i(6)A) at position 37 in tRNAs that read codons beginning with uridine. The sequence is that of tRNA-2-methylthio-N(6)-dimethylallyladenosine synthase from Parafrankia sp. (strain EAN1pec).